A 132-amino-acid polypeptide reads, in one-letter code: Small ribosomal subunit protein uS8 (132 aa).

Belongs to the universal ribosomal protein uS8 family. Part of the 30S ribosomal subunit. Contacts proteins S5 and S12.

One of the primary rRNA binding proteins, it binds directly to 16S rRNA central domain where it helps coordinate assembly of the platform of the 30S subunit. This Rickettsia felis (strain ATCC VR-1525 / URRWXCal2) (Rickettsia azadi) protein is Small ribosomal subunit protein uS8.